Consider the following 328-residue polypeptide: DNA-directed RNA polymerase subunit alpha (328 aa).

The tract at residues 1–232 is alpha N-terminal domain (alpha-NTD); the sequence is MHNSLAELIK…QHLAILVDLK (232 aa). An alpha C-terminal domain (alpha-CTD) region spans residues 246–328; it reads FDPLLLHPVD…PPEGLKKLNQ (83 aa).

This sequence belongs to the RNA polymerase alpha chain family. In terms of assembly, homodimer. The RNAP catalytic core consists of 2 alpha, 1 beta, 1 beta' and 1 omega subunit. When a sigma factor is associated with the core the holoenzyme is formed, which can initiate transcription.

It carries out the reaction RNA(n) + a ribonucleoside 5'-triphosphate = RNA(n+1) + diphosphate. In terms of biological role, DNA-dependent RNA polymerase catalyzes the transcription of DNA into RNA using the four ribonucleoside triphosphates as substrates. This chain is DNA-directed RNA polymerase subunit alpha, found in Methylococcus capsulatus (strain ATCC 33009 / NCIMB 11132 / Bath).